The following is a 70-amino-acid chain: Beta-defensin 43 (70 aa).

Residues 1-22 (MRLLLSILGVLTLLSILPLARS) form the signal peptide. Disulfide bonds link Cys29–Cys57 and Cys36–Cys50.

Belongs to the beta-defensin family.

The protein resides in the secreted. Functionally, has bactericidal activity. This Rattus norvegicus (Rat) protein is Beta-defensin 43 (Defb43).